The primary structure comprises 79 residues: Small ribosomal subunit protein bS18 (79 aa).

It belongs to the bacterial ribosomal protein bS18 family. In terms of assembly, part of the 30S ribosomal subunit. Forms a tight heterodimer with protein bS6.

Functionally, binds as a heterodimer with protein bS6 to the central domain of the 16S rRNA, where it helps stabilize the platform of the 30S subunit. The polypeptide is Small ribosomal subunit protein bS18 (Streptococcus pneumoniae (strain Hungary19A-6)).